Here is a 34-residue protein sequence, read N- to C-terminus: Egg-releasing peptide (34 aa).

In Aplysia californica (California sea hare), this protein is Egg-releasing peptide.